The primary structure comprises 267 residues: MAVISMKQLLEAGVHFGHQTRRWNPKMKPYIFTERNGIYIIDLQKTVKMIDSAYNFVKDAAADDGVILFVGTKKQAQDSIEEEATRAGQYYVNHRWLGGTLTNWNTIQTRIKRLKDLKKMEADGTFERLPKKEVSLLMKQRAKLEKFLGGIEDMPRIPDVIFIVDPRKEQIAVKEAQKLNIPIVAMVDTNTDPDDIDVIIPSNDDAIRAVRLITSKMADAVIEGRQGEDEDVTEDSFKDNKDAKKSVDSLEDIVEAVEGDNDAKSDK.

The tract at residues 224–244 (GRQGEDEDVTEDSFKDNKDAK) is disordered. The span at 235–244 (DSFKDNKDAK) shows a compositional bias: basic and acidic residues.

The protein belongs to the universal ribosomal protein uS2 family.

The polypeptide is Small ribosomal subunit protein uS2 (Lactiplantibacillus plantarum (strain ATCC BAA-793 / NCIMB 8826 / WCFS1) (Lactobacillus plantarum)).